A 74-amino-acid polypeptide reads, in one-letter code: NAD(P)H-quinone oxidoreductase subunit O (74 aa).

It belongs to the complex I NdhO subunit family. NDH-1 can be composed of about 15 different subunits; different subcomplexes with different compositions have been identified which probably have different functions.

It localises to the cellular thylakoid membrane. It catalyses the reaction a plastoquinone + NADH + (n+1) H(+)(in) = a plastoquinol + NAD(+) + n H(+)(out). It carries out the reaction a plastoquinone + NADPH + (n+1) H(+)(in) = a plastoquinol + NADP(+) + n H(+)(out). In terms of biological role, NDH-1 shuttles electrons from an unknown electron donor, via FMN and iron-sulfur (Fe-S) centers, to quinones in the respiratory and/or the photosynthetic chain. The immediate electron acceptor for the enzyme in this species is believed to be plastoquinone. Couples the redox reaction to proton translocation, and thus conserves the redox energy in a proton gradient. Cyanobacterial NDH-1 also plays a role in inorganic carbon-concentration. The protein is NAD(P)H-quinone oxidoreductase subunit O of Synechococcus sp. (strain RCC307).